The chain runs to 328 residues: MAKDIRVLLYYLYTPIENAEQFAADHLAFCKSIGLKGRILVADEGINGTVSGDYETTQKYMDYVHSLPGMEDLWFKIDEESEQAFKKMFVRYKKEIVHLGLEDNDFDNDINPLETTGAYLSPKEFKEALLDKDTVVLDTRNDYEYDLGHFRGAIRPDIRNFRELPQWVRDNKEKFMDKRVVVYCTGGVRCEKFSGWMVREGYKDVGQLHGGIATYGKDPEVQGELWDGKMYVFDERIAVDVNHVNPTIVGKDWFDGTPCERYVNCGNPFCNRRILTSEENEDKYLRGCSHECRVHPRNRYVSKNELTQAEVIERLAAIGESLDQAATV.

Positions Leu130–Glu224 constitute a Rhodanese domain. Cys184 acts as the Cysteine persulfide intermediate in catalysis.

Belongs to the TrhO family.

The catalysed reaction is uridine(34) in tRNA + AH2 + O2 = 5-hydroxyuridine(34) in tRNA + A + H2O. Its function is as follows. Catalyzes oxygen-dependent 5-hydroxyuridine (ho5U) modification at position 34 in tRNAs. The protein is tRNA uridine(34) hydroxylase of Streptococcus pneumoniae (strain Taiwan19F-14).